The following is a 427-amino-acid chain: Serine protease HTRA2, mitochondrial (427 aa).

The disordered stretch occupies residues 33–55 (HTASSSKGSGGDNSKDKENNGQN). The helical transmembrane segment at 66–86 (SAFQFCVPFSLGALVSAVLIE) threads the bilayer. Residues 78 to 81 (ALVS) carry the IAP-binding motif. The segment at 144-307 (SNGSGFVIEQ…IPIDYVKVFL (164 aa)) is serine protease. Residues His162, Asp194, and Ser271 each act as charge relay system in the active site. Residues 330-415 (MGITMLTLTP…DLEIVILRGV (86 aa)) enclose the PDZ domain.

The protein belongs to the peptidase S1C family. Interacts with th/DIAP1 (via BIR 2 domain).

The protein resides in the mitochondrion intermembrane space. Its subcellular location is the mitochondrion membrane. The enzyme catalyses Cleavage of non-polar aliphatic amino-acids at the P1 position, with a preference for Val, Ile and Met. At the P2 and P3 positions, Arg is selected most strongly with a secondary preference for other hydrophilic residues.. Its function is as follows. Serine protease that shows proteolytic activity against a non-specific substrate beta-casein. Promotes or induces cell death either by direct binding to and inhibition of BIRC proteins (also called inhibitor of apoptosis proteins, IAPs), leading to an increase in caspase activity, or by a BIRC inhibition-independent, caspase-independent and serine protease activity-dependent mechanism. Can antagonize antiapoptotic activity of th/Diap1 by directly inducing the degradation of th/Diap1. The protein is Serine protease HTRA2, mitochondrial of Drosophila pseudoobscura pseudoobscura (Fruit fly).